The chain runs to 317 residues: Methionyl-tRNA formyltransferase (317 aa).

Residue 112–115 (SILP) participates in (6S)-5,6,7,8-tetrahydrofolate binding.

The protein belongs to the Fmt family.

It catalyses the reaction L-methionyl-tRNA(fMet) + (6R)-10-formyltetrahydrofolate = N-formyl-L-methionyl-tRNA(fMet) + (6S)-5,6,7,8-tetrahydrofolate + H(+). Its function is as follows. Attaches a formyl group to the free amino group of methionyl-tRNA(fMet). The formyl group appears to play a dual role in the initiator identity of N-formylmethionyl-tRNA by promoting its recognition by IF2 and preventing the misappropriation of this tRNA by the elongation apparatus. The sequence is that of Methionyl-tRNA formyltransferase from Actinobacillus succinogenes (strain ATCC 55618 / DSM 22257 / CCUG 43843 / 130Z).